The following is a 258-amino-acid chain: Phosphate import ATP-binding protein PstB (258 aa).

Residues 5–247 enclose the ABC transporter domain; the sequence is LDLKGVNIYY…EKIFSNPTEK (243 aa). 37–44 contributes to the ATP binding site; it reads GASGCGKT.

Belongs to the ABC transporter superfamily. Phosphate importer (TC 3.A.1.7) family. The complex is composed of two ATP-binding proteins (PstB), two transmembrane proteins (PstC and PstA) and a solute-binding protein (PstS).

Its subcellular location is the cell membrane. It catalyses the reaction phosphate(out) + ATP + H2O = ADP + 2 phosphate(in) + H(+). Functionally, part of the ABC transporter complex PstSACB involved in phosphate import. Responsible for energy coupling to the transport system. The chain is Phosphate import ATP-binding protein PstB from Mycobacterium leprae (strain TN).